We begin with the raw amino-acid sequence, 123 residues long: Small ribosomal subunit protein uS11 (123 aa).

Belongs to the universal ribosomal protein uS11 family. Part of the 30S ribosomal subunit. Interacts with proteins S7 and S18. Binds to IF-3.

In terms of biological role, located on the platform of the 30S subunit, it bridges several disparate RNA helices of the 16S rRNA. Forms part of the Shine-Dalgarno cleft in the 70S ribosome. This Coxiella burnetii (strain CbuK_Q154) (Coxiella burnetii (strain Q154)) protein is Small ribosomal subunit protein uS11.